A 253-amino-acid chain; its full sequence is Methionine aminopeptidase (253 aa).

Histidine 78 is a substrate binding site. 3 residues coordinate a divalent metal cation: aspartate 95, aspartate 106, and histidine 169. Position 176 (histidine 176) interacts with substrate. Residues glutamate 206 and glutamate 237 each coordinate a divalent metal cation.

It belongs to the peptidase M24A family. Methionine aminopeptidase type 1 subfamily. As to quaternary structure, monomer. Co(2+) serves as cofactor. Zn(2+) is required as a cofactor. It depends on Mn(2+) as a cofactor. Requires Fe(2+) as cofactor.

It carries out the reaction Release of N-terminal amino acids, preferentially methionine, from peptides and arylamides.. In terms of biological role, removes the N-terminal methionine from nascent proteins. The N-terminal methionine is often cleaved when the second residue in the primary sequence is small and uncharged (Met-Ala-, Cys, Gly, Pro, Ser, Thr, or Val). Requires deformylation of the N(alpha)-formylated initiator methionine before it can be hydrolyzed. This is Methionine aminopeptidase from Helicobacter pylori (strain ATCC 700392 / 26695) (Campylobacter pylori).